The chain runs to 888 residues: Phosphoenolpyruvate carboxylase (888 aa).

Catalysis depends on residues His144 and Lys553.

This sequence belongs to the PEPCase type 1 family. Mg(2+) is required as a cofactor.

It carries out the reaction oxaloacetate + phosphate = phosphoenolpyruvate + hydrogencarbonate. Its function is as follows. Forms oxaloacetate, a four-carbon dicarboxylic acid source for the tricarboxylic acid cycle. The polypeptide is Phosphoenolpyruvate carboxylase (Alcanivorax borkumensis (strain ATCC 700651 / DSM 11573 / NCIMB 13689 / SK2)).